The sequence spans 787 residues: uncharacterized protein (787 aa).

Position 1 is an N-acetylmethionine (Met-1). Disordered stretches follow at residues 1 to 115 (MFDG…NDHK), 130 to 200 (TNPF…QRSE), and 217 to 238 (VSSG…ASQD). Residues 36-54 (VPSTIKKSTNIARTSTAET) are compositionally biased toward polar residues. Ser-63 is subject to Phosphoserine. A compositionally biased stretch (polar residues) spans 130–142 (TNPFTTSANSNAH). The segment covering 160–169 (SITTSISNNT) has biased composition (low complexity). Residues 170–184 (TKEEIESNNDSERDS) show a composition bias toward basic and acidic residues. The span at 218 to 230 (SSGSSLSLDTSEN) shows a compositional bias: low complexity. Phosphoserine occurs at positions 254, 313, 342, 345, 390, 477, 492, 546, 683, and 699.

It localises to the cytoplasm. This is an uncharacterized protein from Saccharomyces cerevisiae (strain ATCC 204508 / S288c) (Baker's yeast).